We begin with the raw amino-acid sequence, 386 residues long: tRNA N6-adenosine threonylcarbamoyltransferase (386 aa).

Residues H141, H145, and Y162 each contribute to the a divalent metal cation site. Residues 162-166, D194, G209, E213, and N315 each bind substrate; that span reads YVSGG. A divalent metal cation is bound at residue D344.

Belongs to the KAE1 / TsaD family. In terms of assembly, component of the EKC/KEOPS complex composed of at least BUD32, CGI121, GON7, KAE1 and PCC1; the whole complex dimerizes. The cofactor is a divalent metal cation.

It localises to the cytoplasm. The protein localises to the nucleus. The catalysed reaction is L-threonylcarbamoyladenylate + adenosine(37) in tRNA = N(6)-L-threonylcarbamoyladenosine(37) in tRNA + AMP + H(+). In terms of biological role, component of the EKC/KEOPS complex that is required for the formation of a threonylcarbamoyl group on adenosine at position 37 (t(6)A37) in tRNAs that read codons beginning with adenine. The complex is probably involved in the transfer of the threonylcarbamoyl moiety of threonylcarbamoyl-AMP (TC-AMP) to the N6 group of A37. KAE1 likely plays a direct catalytic role in this reaction, but requires other protein(s) of the complex to fulfill this activity. The EKC/KEOPS complex also promotes both telomere uncapping and telomere elongation. The complex is required for efficient recruitment of transcriptional coactivators. The sequence is that of tRNA N6-adenosine threonylcarbamoyltransferase from Saccharomyces cerevisiae (strain ATCC 204508 / S288c) (Baker's yeast).